Here is a 185-residue protein sequence, read N- to C-terminus: Ribosome-recycling factor (185 aa).

Belongs to the RRF family.

The protein resides in the cytoplasm. Functionally, responsible for the release of ribosomes from messenger RNA at the termination of protein biosynthesis. May increase the efficiency of translation by recycling ribosomes from one round of translation to another. The polypeptide is Ribosome-recycling factor (Buchnera aphidicola subsp. Acyrthosiphon pisum (strain APS) (Acyrthosiphon pisum symbiotic bacterium)).